The following is a 283-amino-acid chain: Formamidopyrimidine-DNA glycosylase (283 aa).

Proline 2 functions as the Schiff-base intermediate with DNA in the catalytic mechanism. Glutamate 3 acts as the Proton donor in catalysis. The active-site Proton donor; for beta-elimination activity is the lysine 60. Positions 100, 119, and 164 each coordinate DNA. An FPG-type zinc finger spans residues 249-283; sequence WVYNRAGEPCKVCGDVIQRIKLGGRSSHFCRQCQV. Arginine 273 functions as the Proton donor; for delta-elimination activity in the catalytic mechanism.

It belongs to the FPG family. As to quaternary structure, monomer. Zn(2+) is required as a cofactor.

The enzyme catalyses Hydrolysis of DNA containing ring-opened 7-methylguanine residues, releasing 2,6-diamino-4-hydroxy-5-(N-methyl)formamidopyrimidine.. It catalyses the reaction 2'-deoxyribonucleotide-(2'-deoxyribose 5'-phosphate)-2'-deoxyribonucleotide-DNA = a 3'-end 2'-deoxyribonucleotide-(2,3-dehydro-2,3-deoxyribose 5'-phosphate)-DNA + a 5'-end 5'-phospho-2'-deoxyribonucleoside-DNA + H(+). Functionally, involved in base excision repair of DNA damaged by oxidation or by mutagenic agents. Acts as a DNA glycosylase that recognizes and removes damaged bases. Has a preference for oxidized purines, such as 7,8-dihydro-8-oxoguanine (8-oxoG). Has AP (apurinic/apyrimidinic) lyase activity and introduces nicks in the DNA strand. Cleaves the DNA backbone by beta-delta elimination to generate a single-strand break at the site of the removed base with both 3'- and 5'-phosphates. The sequence is that of Formamidopyrimidine-DNA glycosylase from Nostoc sp. (strain PCC 7120 / SAG 25.82 / UTEX 2576).